Here is a 513-residue protein sequence, read N- to C-terminus: Probable lipid II flippase MurJ (513 aa).

15 helical membrane passes run 3–23, 25–45, 83–103, 133–153, 162–182, 186–206, 221–241, 245–265, 271–291, 313–333, 354–374, 382–402, 405–425, 441–461, and 481–501; these read ILKS…LGFM, DLLI…FLAF, FISN…AFGI, IMFP…ILNA, YSSI…TAYF, ILSL…YQFP, ILNL…LGMS, VSII…ISWI, LVEF…LPLL, LVCI…ESLI, IEFY…LAGF, TPMK…IFFI, FQYT…FFLL, WLRF…LLFI, and LFYI…CLGL.

Belongs to the MurJ/MviN family.

The protein localises to the cell inner membrane. The protein operates within cell wall biogenesis; peptidoglycan biosynthesis. Functionally, involved in peptidoglycan biosynthesis. Transports lipid-linked peptidoglycan precursors from the inner to the outer leaflet of the cytoplasmic membrane. In Buchnera aphidicola subsp. Baizongia pistaciae (strain Bp), this protein is Probable lipid II flippase MurJ.